Here is a 232-residue protein sequence, read N- to C-terminus: 7-cyano-7-deazaguanine synthase (232 aa).

7 to 17 (CSGGLDSVSLA) lines the ATP pocket. Residues C185, C193, C196, and C199 each contribute to the Zn(2+) site.

This sequence belongs to the QueC family. Zn(2+) serves as cofactor.

It carries out the reaction 7-carboxy-7-deazaguanine + NH4(+) + ATP = 7-cyano-7-deazaguanine + ADP + phosphate + H2O + H(+). It functions in the pathway purine metabolism; 7-cyano-7-deazaguanine biosynthesis. Functionally, catalyzes the ATP-dependent conversion of 7-carboxy-7-deazaguanine (CDG) to 7-cyano-7-deazaguanine (preQ(0)). In Brucella anthropi (strain ATCC 49188 / DSM 6882 / CCUG 24695 / JCM 21032 / LMG 3331 / NBRC 15819 / NCTC 12168 / Alc 37) (Ochrobactrum anthropi), this protein is 7-cyano-7-deazaguanine synthase.